The primary structure comprises 194 residues: Small ribosomal subunit protein uS7 (194 aa).

The protein belongs to the universal ribosomal protein uS7 family. As to quaternary structure, part of the 30S ribosomal subunit.

In terms of biological role, one of the primary rRNA binding proteins, it binds directly to 16S rRNA where it nucleates assembly of the head domain of the 30S subunit. Is located at the subunit interface close to the decoding center. This chain is Small ribosomal subunit protein uS7, found in Methanospirillum hungatei JF-1 (strain ATCC 27890 / DSM 864 / NBRC 100397 / JF-1).